The sequence spans 154 residues: 6,7-dimethyl-8-ribityllumazine synthase (154 aa).

Residues F26, 60–62, and 84–86 each bind 5-amino-6-(D-ribitylamino)uracil; these read ALE and CII. Position 89–90 (89–90) interacts with (2S)-2-hydroxy-3-oxobutyl phosphate; it reads ET. The active-site Proton donor is the H92. 5-amino-6-(D-ribitylamino)uracil is bound at residue N117. R131 is a binding site for (2S)-2-hydroxy-3-oxobutyl phosphate.

This sequence belongs to the DMRL synthase family.

It catalyses the reaction (2S)-2-hydroxy-3-oxobutyl phosphate + 5-amino-6-(D-ribitylamino)uracil = 6,7-dimethyl-8-(1-D-ribityl)lumazine + phosphate + 2 H2O + H(+). The protein operates within cofactor biosynthesis; riboflavin biosynthesis; riboflavin from 2-hydroxy-3-oxobutyl phosphate and 5-amino-6-(D-ribitylamino)uracil: step 1/2. Catalyzes the formation of 6,7-dimethyl-8-ribityllumazine by condensation of 5-amino-6-(D-ribitylamino)uracil with 3,4-dihydroxy-2-butanone 4-phosphate. This is the penultimate step in the biosynthesis of riboflavin. In Paracidovorax citrulli (strain AAC00-1) (Acidovorax citrulli), this protein is 6,7-dimethyl-8-ribityllumazine synthase.